The chain runs to 225 residues: uncharacterized protein (225 aa).

The helical transmembrane segment at 12–32 (AGFMMIFVFVIASFLLVLLFF) threads the bilayer.

Its subcellular location is the cell membrane. This is an uncharacterized protein from Bacillus subtilis (strain 168).